We begin with the raw amino-acid sequence, 311 residues long: MQEIQKNTKKEQYNLNKLQKRLRRNVGEAIADFNMIEEGDRIMVCLSGGKDSYTMLEILRNLQQSAPINFSLVAVNLDQKQPGFPEHILPAYLEPLGVEYKIVEENTYGIVKEKIPEGKTTCSLCSRLRRGILYRTATELGATKIALGHHRDDILQTLFLNMFYGGKMKGMPPKLMSDDGKHIVIRPLAYCREKDIVRFAEAKAFPIIPCNLCGSQPNLQRQVIADMLRDWDKRYPGRIETMFSAMQNVVPSHLCDTNLFDFKGITHGSEVVDGGDLAFDREEIPLQPAGWQPEEDDTSLEALRLDVIEVK.

Residues 47–52 (SGGKDS) carry the PP-loop motif motif. [4Fe-4S] cluster-binding residues include Cys-122, Cys-125, and Cys-213.

Belongs to the TtcA family. In terms of assembly, homodimer. Mg(2+) serves as cofactor. It depends on [4Fe-4S] cluster as a cofactor.

It localises to the cytoplasm. It catalyses the reaction cytidine(32) in tRNA + S-sulfanyl-L-cysteinyl-[cysteine desulfurase] + AH2 + ATP = 2-thiocytidine(32) in tRNA + L-cysteinyl-[cysteine desulfurase] + A + AMP + diphosphate + H(+). The protein operates within tRNA modification. Its function is as follows. Catalyzes the ATP-dependent 2-thiolation of cytidine in position 32 of tRNA, to form 2-thiocytidine (s(2)C32). The sulfur atoms are provided by the cysteine/cysteine desulfurase (IscS) system. The protein is tRNA-cytidine(32) 2-sulfurtransferase of Salmonella choleraesuis (strain SC-B67).